The primary structure comprises 108 residues: Replication initiation control protein YabA (108 aa).

Zn(2+) is bound by residues H82, C84, C98, and C101.

This sequence belongs to the YabA family. As to quaternary structure, homotetramer. Interacts with both DnaA and DnaN, acting as a bridge between these two proteins. Requires Zn(2+) as cofactor.

It localises to the cytoplasm. It is found in the nucleoid. Its function is as follows. Involved in control of chromosome replication initiation. Inhibits the cooperative binding of DnaA to the oriC region, thus negatively regulating initiation of chromosome replication. Inhibits the ability of DnaA-ATP to form a helix on DNA; does not disassemble preformed DnaA-DNA helices. Decreases the residence time of DnaA on the chromosome at its binding sites (oriC, replication forks and promoter-binding sites). Tethers DnaA to the replication machinery via the DNA polymerase beta sliding clamp subunit (dnaN). Associates with oriC and other DnaA targets on the chromosome in a DnaA-dependent manner. The chain is Replication initiation control protein YabA from Streptococcus agalactiae serotype Ia (strain ATCC 27591 / A909 / CDC SS700).